Here is a 129-residue protein sequence, read N- to C-terminus: MSNIPAELKYASSHEWIRKEEDGSYTVGISEHAQELLGDMVFVELPEVGDTLSAGEDCAVAESVKAASDIYAPLSGEVLAVNEALEDSPELVNSDAFGDGWFFRVMPSDVAEIDNLLDAEGYQAVIDEE.

The 83-residue stretch at Ser-24–Met-106 folds into the Lipoyl-binding domain. Residue Lys-65 is modified to N6-lipoyllysine.

This sequence belongs to the GcvH family. In terms of assembly, the glycine cleavage system is composed of four proteins: P, T, L and H. (R)-lipoate is required as a cofactor.

Functionally, the glycine cleavage system catalyzes the degradation of glycine. The H protein shuttles the methylamine group of glycine from the P protein to the T protein. This is Glycine cleavage system H protein from Shewanella woodyi (strain ATCC 51908 / MS32).